We begin with the raw amino-acid sequence, 208 residues long: Probable nicotinate-nucleotide adenylyltransferase (208 aa).

Belongs to the NadD family.

It carries out the reaction nicotinate beta-D-ribonucleotide + ATP + H(+) = deamido-NAD(+) + diphosphate. Its pathway is cofactor biosynthesis; NAD(+) biosynthesis; deamido-NAD(+) from nicotinate D-ribonucleotide: step 1/1. Its function is as follows. Catalyzes the reversible adenylation of nicotinate mononucleotide (NaMN) to nicotinic acid adenine dinucleotide (NaAD). The protein is Probable nicotinate-nucleotide adenylyltransferase of Nostoc sp. (strain PCC 7120 / SAG 25.82 / UTEX 2576).